The chain runs to 773 residues: DNA polymerase (773 aa).

Residues 1-131 (MILDADYITE…IDRGLIPMEG (131 aa)) are N-terminal domain. The interval 133–385 (EELRMLAFDI…ELARRTESYA (253 aa)) is exonuclease domain. 3 residues coordinate Mg(2+): aspartate 141, glutamate 143, and aspartate 315. The polymerase domain stretch occupies residues 390–773 (KEPEKGLWEN…GLGAWLKPKT (384 aa)). Intrachain disulfides connect cysteine 428–cysteine 442 and cysteine 506–cysteine 509.

This sequence belongs to the DNA polymerase type-B family. The cofactor is Mg(2+).

It carries out the reaction DNA(n) + a 2'-deoxyribonucleoside 5'-triphosphate = DNA(n+1) + diphosphate. Its activity is regulated as follows. DNA polymerase activity strongly inhibited by uracil-containing oligonucleotides. Thermostable DNA polymerase. In addition to polymerase activity, this DNA polymerase exhibits 3' to 5' exonuclease activity. In Desulfurococcus sp. (strain Tok), this protein is DNA polymerase (pol).